The sequence spans 440 residues: Thymidine phosphorylase (440 aa).

It belongs to the thymidine/pyrimidine-nucleoside phosphorylase family. As to quaternary structure, homodimer.

It catalyses the reaction thymidine + phosphate = 2-deoxy-alpha-D-ribose 1-phosphate + thymine. Its pathway is pyrimidine metabolism; dTMP biosynthesis via salvage pathway; dTMP from thymine: step 1/2. The enzymes which catalyze the reversible phosphorolysis of pyrimidine nucleosides are involved in the degradation of these compounds and in their utilization as carbon and energy sources, or in the rescue of pyrimidine bases for nucleotide synthesis. In Proteus mirabilis (strain HI4320), this protein is Thymidine phosphorylase.